We begin with the raw amino-acid sequence, 179 residues long: ATP synthase subunit delta (179 aa).

It belongs to the ATPase delta chain family. As to quaternary structure, F-type ATPases have 2 components, F(1) - the catalytic core - and F(0) - the membrane proton channel. F(1) has five subunits: alpha(3), beta(3), gamma(1), delta(1), epsilon(1). F(0) has three main subunits: a(1), b(2) and c(10-14). The alpha and beta chains form an alternating ring which encloses part of the gamma chain. F(1) is attached to F(0) by a central stalk formed by the gamma and epsilon chains, while a peripheral stalk is formed by the delta and b chains.

The protein localises to the cell membrane. F(1)F(0) ATP synthase produces ATP from ADP in the presence of a proton or sodium gradient. F-type ATPases consist of two structural domains, F(1) containing the extramembraneous catalytic core and F(0) containing the membrane proton channel, linked together by a central stalk and a peripheral stalk. During catalysis, ATP synthesis in the catalytic domain of F(1) is coupled via a rotary mechanism of the central stalk subunits to proton translocation. In terms of biological role, this protein is part of the stalk that links CF(0) to CF(1). It either transmits conformational changes from CF(0) to CF(1) or is implicated in proton conduction. The protein is ATP synthase subunit delta of Bacillus sp. (strain PS3).